The following is an 86-amino-acid chain: Large ribosomal subunit protein bL27 (86 aa).

Gly residues predominate over residues 1–10; that stretch reads MAQKKGGGST. The interval 1–21 is disordered; the sequence is MAQKKGGGSTRNGRDSESKRL.

Belongs to the bacterial ribosomal protein bL27 family.

This Ralstonia pickettii (strain 12J) protein is Large ribosomal subunit protein bL27.